Consider the following 136-residue polypeptide: Small ribosomal subunit protein uS9 (136 aa).

The segment at 97–136 (SPDNRKPLKTEGHLSRDPRAKERRKYGLKKARKAPQFSKR) is disordered. The span at 98 to 116 (PDNRKPLKTEGHLSRDPRA) shows a compositional bias: basic and acidic residues. The segment covering 117–136 (KERRKYGLKKARKAPQFSKR) has biased composition (basic residues).

It belongs to the universal ribosomal protein uS9 family.

The sequence is that of Small ribosomal subunit protein uS9 from Prochlorococcus marinus (strain MIT 9301).